The chain runs to 342 residues: MTNILSPEKSENDQELPIRPSYLQEFVGQQQIKENLSVFIKAAKSRNEHLDHTLFYGPPGLGKTTLAKIISNEIGGNFKSTSGPAILKVADLAAILTNLEKNDVLFIDEIHRLNTAIEEVLYPAMEDFELDIIIGEGSAARSVKITLPKFTLIGATTRLGLLSNPLRDRFGIPMRLNFYNTEELKKVLNRASKLLDIDLTDSGSEEIAKRSRGTPRIALRLLRRIRDFAAVDGKSRVDKEISDFGLNRLEVDCIGLDSNDYRYLKFIADNYNGGPVGIETIAAALSEQRDALEETIEPYLIQIGLLQRTPRGRVITIAAFEHLKMPVPNQSHHQFNIFNENE.

Residues 1–179 (MTNILSPEKS…FGIPMRLNFY (179 aa)) form a large ATPase domain (RuvB-L) region. ATP is bound by residues Ile18, Arg19, Gly60, Lys63, Thr64, Thr65, 126–128 (EDF), Arg169, Tyr179, and Arg216. Mg(2+) is bound at residue Thr64. Residues 180–250 (NTEELKKVLN…ISDFGLNRLE (71 aa)) are small ATPAse domain (RuvB-S). The tract at residues 253-342 (CIGLDSNDYR…HQFNIFNENE (90 aa)) is head domain (RuvB-H). Arg289, Arg308, and Arg313 together coordinate DNA.

Belongs to the RuvB family. Homohexamer. Forms an RuvA(8)-RuvB(12)-Holliday junction (HJ) complex. HJ DNA is sandwiched between 2 RuvA tetramers; dsDNA enters through RuvA and exits via RuvB. An RuvB hexamer assembles on each DNA strand where it exits the tetramer. Each RuvB hexamer is contacted by two RuvA subunits (via domain III) on 2 adjacent RuvB subunits; this complex drives branch migration. In the full resolvosome a probable DNA-RuvA(4)-RuvB(12)-RuvC(2) complex forms which resolves the HJ.

It is found in the cytoplasm. It catalyses the reaction ATP + H2O = ADP + phosphate + H(+). In terms of biological role, the RuvA-RuvB-RuvC complex processes Holliday junction (HJ) DNA during genetic recombination and DNA repair, while the RuvA-RuvB complex plays an important role in the rescue of blocked DNA replication forks via replication fork reversal (RFR). RuvA specifically binds to HJ cruciform DNA, conferring on it an open structure. The RuvB hexamer acts as an ATP-dependent pump, pulling dsDNA into and through the RuvAB complex. RuvB forms 2 homohexamers on either side of HJ DNA bound by 1 or 2 RuvA tetramers; 4 subunits per hexamer contact DNA at a time. Coordinated motions by a converter formed by DNA-disengaged RuvB subunits stimulates ATP hydrolysis and nucleotide exchange. Immobilization of the converter enables RuvB to convert the ATP-contained energy into a lever motion, pulling 2 nucleotides of DNA out of the RuvA tetramer per ATP hydrolyzed, thus driving DNA branch migration. The RuvB motors rotate together with the DNA substrate, which together with the progressing nucleotide cycle form the mechanistic basis for DNA recombination by continuous HJ branch migration. Branch migration allows RuvC to scan DNA until it finds its consensus sequence, where it cleaves and resolves cruciform DNA. This chain is Holliday junction branch migration complex subunit RuvB, found in Rickettsia africae (strain ESF-5).